We begin with the raw amino-acid sequence, 124 residues long: Fluoride-specific ion channel FluC (124 aa).

The next 4 membrane-spanning stretches (helical) occupy residues 4 to 24 (FLAV…LGLW), 34 to 54 (LGTL…LAWF), 67 to 87 (FVIT…AEVV), and 100 to 120 (LIAF…FYSL). Na(+) contacts are provided by glycine 74 and threonine 77.

Belongs to the fluoride channel Fluc/FEX (TC 1.A.43) family.

The protein localises to the cell inner membrane. The catalysed reaction is fluoride(in) = fluoride(out). With respect to regulation, na(+) is not transported, but it plays an essential structural role and its presence is essential for fluoride channel function. Fluoride-specific ion channel. Important for reducing fluoride concentration in the cell, thus reducing its toxicity. In Thiobacillus denitrificans (strain ATCC 25259 / T1), this protein is Fluoride-specific ion channel FluC.